The following is a 237-amino-acid chain: ATP synthase subunit 4, mitochondrial (237 aa).

The N-terminal 30 residues, 1-30 (MFRALTLKASARPVVAGLCSRQAPIAAVRY), are a transit peptide targeting the mitochondrion.

This sequence belongs to the eukaryotic ATPase B chain family.

The protein resides in the mitochondrion. The protein localises to the mitochondrion inner membrane. Its function is as follows. Mitochondrial membrane ATP synthase (F(1)F(0) ATP synthase or Complex V) produces ATP from ADP in the presence of a proton gradient across the membrane which is generated by electron transport complexes of the respiratory chain. F-type ATPases consist of two structural domains, F(1) - containing the extramembraneous catalytic core, and F(0) - containing the membrane proton channel, linked together by a central stalk and a peripheral stalk. During catalysis, ATP synthesis in the catalytic domain of F(1) is coupled via a rotary mechanism of the central stalk subunits to proton translocation. Part of the complex F(0) domain and the peripheric stalk, which acts as a stator to hold the catalytic alpha(3)beta(3) subcomplex and subunit a/ATP6 static relative to the rotary elements. The protein is ATP synthase subunit 4, mitochondrial (ATP4) of Kluyveromyces lactis (strain ATCC 8585 / CBS 2359 / DSM 70799 / NBRC 1267 / NRRL Y-1140 / WM37) (Yeast).